The sequence spans 608 residues: Cytoplasmic dynein 1 intermediate chain 1 (608 aa).

2 stretches are compositionally biased toward basic and acidic residues: residues 1 to 13 (MSDK…ELER) and 20 to 60 (QIRE…RETE). A disordered region spans residues 1-106 (MSDKSDLKAE…SGDLGPLTRR (106 aa)). Ser-2 carries the post-translational modification N-acetylserine. Ser-50 is modified (phosphoserine). A compositionally biased stretch (pro residues) spans 70-79 (PEPPLVPTPM). The span at 80-90 (SPSSKSVSTPS) shows a compositional bias: low complexity. Ser-83 is subject to Phosphoserine. A Phosphothreonine modification is found at Thr-88. Phosphoserine is present on residues Ser-90, Ser-94, and Ser-97. Residues 110–126 (KLGVSKITQVDFLPREV) form an interaction with DYNLT1 region. Positions 132–184 (ETQTPLATHQSEEDEDDEEMVEPKGDQDSEQENEDKKQEVKEAPPRELTEEEK) are disordered. Thr-139 carries the phosphothreonine modification. A phosphoserine mark is found at Ser-142 and Ser-160. A compositionally biased stretch (basic and acidic residues) spans 165–184 (EDKKQEVKEAPPRELTEEEK). WD repeat units lie at residues 248-297 (SKHR…TTPE), 301-341 (HCQS…RTPV), 350-391 (AHTH…TPQE), 400-440 (SKPV…AGIG), 445-490 (GHQG…PLYS), 493-533 (DNAD…EVPT), and 539-578 (EGAS…VPHN). Ser-598 is modified (phosphoserine).

It belongs to the dynein intermediate chain family. As to quaternary structure, homodimer. The cytoplasmic dynein 1 complex consists of two catalytic heavy chains (HCs) and a number of non-catalytic subunits presented by intermediate chains (ICs), light intermediate chains (LICs) and light chains (LCs); the composition seems to vary in respect to the IC, LIC and LC composition. The heavy chain homodimer serves as a scaffold for the probable homodimeric assembly of the respective non-catalytic subunits. The ICs and LICs bind directly to the HC dimer and the LCs assemble on the IC dimer. Interacts with DYNC1H1. Interacts with DYNLT1 and DYNLT3. Interacts with DCTN1. Interacts with MCRS1; the interaction is required for the proper distribution of centriolar satellites.

It localises to the cytoplasm. Its subcellular location is the chromosome. It is found in the centromere. The protein resides in the kinetochore. The protein localises to the cytoskeleton. It localises to the spindle pole. Its function is as follows. Acts as one of several non-catalytic accessory components of the cytoplasmic dynein 1 complex that are thought to be involved in linking dynein to cargos and to adapter proteins that regulate dynein function. Cytoplasmic dynein 1 acts as a motor for the intracellular retrograde motility of vesicles and organelles along microtubules. The intermediate chains mediate the binding of dynein to dynactin via its 150 kDa component (p150-glued) DCTN1. May play a role in mediating the interaction of cytoplasmic dynein with membranous organelles and kinetochores. The polypeptide is Cytoplasmic dynein 1 intermediate chain 1 (DYNC1I1) (Bos taurus (Bovine)).